An 86-amino-acid polypeptide reads, in one-letter code: UPF0512 protein V (86 aa).

It belongs to the UPF0512 family.

The polypeptide is UPF0512 protein V (Dictyostelium discoideum (Social amoeba)).